Consider the following 880-residue polypeptide: Leucine--tRNA ligase (880 aa).

The short motif at 46–56 is the 'HIGH' region element; the sequence is PYPSGALHMGH. The short motif at 638 to 642 is the 'KMSKS' region element; sequence KMSKS. Lys641 provides a ligand contact to ATP.

It belongs to the class-I aminoacyl-tRNA synthetase family.

It localises to the cytoplasm. It catalyses the reaction tRNA(Leu) + L-leucine + ATP = L-leucyl-tRNA(Leu) + AMP + diphosphate. This chain is Leucine--tRNA ligase, found in Stenotrophomonas maltophilia (strain K279a).